A 167-amino-acid polypeptide reads, in one-letter code: Peptide deformylase (167 aa).

2 residues coordinate Fe cation: cysteine 91 and histidine 133. Glutamate 134 is an active-site residue. Residue histidine 137 participates in Fe cation binding.

The protein belongs to the polypeptide deformylase family. Fe(2+) serves as cofactor.

The enzyme catalyses N-terminal N-formyl-L-methionyl-[peptide] + H2O = N-terminal L-methionyl-[peptide] + formate. In terms of biological role, removes the formyl group from the N-terminal Met of newly synthesized proteins. Requires at least a dipeptide for an efficient rate of reaction. N-terminal L-methionine is a prerequisite for activity but the enzyme has broad specificity at other positions. This Baumannia cicadellinicola subsp. Homalodisca coagulata protein is Peptide deformylase.